We begin with the raw amino-acid sequence, 533 residues long: Glucosidase 2 subunit beta (533 aa).

The signal sequence occupies residues 1-13; it reads MLLLLLLLPMCWA. Serine 23 is modified (phosphoserine). 2 consecutive LDL-receptor class A domains span residues 36 to 70 and 71 to 112; these read FTCLDGSASIPFDQVNDDYCDCKDGSDEPGTAACP and NGSF…IVCE. Disulfide bonds link cysteine 38–cysteine 57 and cysteine 55–cysteine 69. Aspartate 48 provides a ligand contact to substrate. Residues glutamine 49, aspartate 52, tyrosine 54, aspartate 56, aspartate 62, and glutamate 63 each coordinate Ca(2+). Aspartate 52 lines the substrate pocket. Asparagine 71 carries an N-linked (GlcNAc...) asparagine glycan. Cystine bridges form between cysteine 76–cysteine 98, cysteine 96–cysteine 111, and cysteine 99–cysteine 115. Serine 88 is subject to Phosphoserine; by PKC. Positions 93, 95, 97, 103, and 104 each coordinate Ca(2+). The residue at position 165 (lysine 165) is an N6-succinyllysine. Serine 167 carries the phosphoserine modification. 2 consecutive EF-hand domains span residues 208 to 243 and 244 to 279; these read RERELAASAFQELDDDMDGAVSVAELQTHPELDTDG and DGALSEGEAQTLLGGDAQMDAAFFYDRVWAAIRDKY. Positions 221, 223, 225, and 232 each coordinate Ca(2+). Positions 284–363 are disordered; that stretch reads LPTEYPPSPP…SPTEEDRMPP (80 aa). Over residues 312–336 the composition is skewed to acidic residues; that stretch reads TEEEDEDEEDEETEEDEDEEDEDSQ. Phosphoserine; by PKC is present on residues serine 388 and serine 395. One can recognise an MRH domain in the interval 418-519; the sequence is SQCYELTTNE…ELMTPAACPE (102 aa). Cysteine 420 and cysteine 433 form a disulfide bridge. Serine 439 bears the Phosphoserine; by PKC mark. 2 cysteine pairs are disulfide-bonded: cysteine 476/cysteine 505 and cysteine 490/cysteine 517. Residue asparagine 481 is glycosylated (N-linked (GlcNAc...) asparagine). The Prevents secretion from ER signature appears at 530-533; it reads HDEL.

In terms of assembly, heterodimer of a catalytic alpha subunit (GANAB) and a beta subunit (PRKCSH). Binds glycosylated PTPRC. In terms of tissue distribution, ubiquitous. Highly expressed in liver, spleen, lung, duodenum, stomach, adrenal gland, pituitary, testis, corpus luteum, uterus and fetal ovary.

It is found in the endoplasmic reticulum. Its pathway is glycan metabolism; N-glycan metabolism. In terms of biological role, regulatory subunit of glucosidase II that cleaves sequentially the 2 innermost alpha-1,3-linked glucose residues from the Glc(2)Man(9)GlcNAc(2) oligosaccharide precursor of immature glycoproteins. Required for efficient PKD1/Polycystin-1 biogenesis and trafficking to the plasma membrane of the primary cilia. The polypeptide is Glucosidase 2 subunit beta (PRKCSH) (Bos taurus (Bovine)).